A 270-amino-acid polypeptide reads, in one-letter code: Probable inositol 1-monophosphatase ImpA (270 aa).

Glutamate 69, aspartate 85, isoleucine 87, and aspartate 88 together coordinate Mg(2+). Residue glutamate 69 participates in substrate binding. Substrate is bound by residues 87 to 90 (IDGT), arginine 187, and aspartate 216. Aspartate 216 lines the Mg(2+) pocket.

The protein belongs to the inositol monophosphatase superfamily. Requires Mg(2+) as cofactor.

It catalyses the reaction a myo-inositol phosphate + H2O = myo-inositol + phosphate. The protein operates within polyol metabolism; myo-inositol biosynthesis; myo-inositol from D-glucose 6-phosphate: step 2/2. Catalyzes the dephosphorylation of inositol 1-phosphate (I-1-P) to yield free myo-inositol, a key metabolite in mycobacteria. The sequence is that of Probable inositol 1-monophosphatase ImpA (impA) from Mycobacterium tuberculosis (strain ATCC 25618 / H37Rv).